The chain runs to 309 residues: Putative rhizopine-binding protein (309 aa).

Residues 1-20 (MKKFIIGIAAAVLVSTAAHA) form the signal peptide.

This sequence belongs to the bacterial solute-binding protein 2 family.

It localises to the periplasm. Its function is as follows. Involved in rhizopine (L-3-O-methyl-scyllo-inosamine) catabolism. Could be involved in its high affinity transport. The chain is Putative rhizopine-binding protein (mocB) from Rhizobium meliloti (Ensifer meliloti).